The primary structure comprises 199 residues: Zinc finger matrin-type protein 2 (199 aa).

Alanine 2 carries the post-translational modification N-acetylalanine. Glycyl lysine isopeptide (Lys-Gly) (interchain with G-Cter in SUMO2) cross-links involve residues lysine 8, lysine 36, lysine 39, lysine 45, lysine 55, lysine 61, lysine 64, lysine 70, lysine 102, and lysine 123. Residues 27-46 (KRLTEEREKKDGKPVQPVKR) form a disordered region. The Matrin-type zinc finger occupies 80–104 (YYCNVCDCVVKDSINFLDHINGKKH). A compositionally biased stretch (basic and acidic residues) spans 150–173 (REEEEKAKAYKKEKQKEKKRRAEE). The disordered stretch occupies residues 150-175 (REEEEKAKAYKKEKQKEKKRRAEEDL).

Component of the spliceosome B complex.

It is found in the nucleus. Involved in pre-mRNA splicing as a component of the spliceosome. This Homo sapiens (Human) protein is Zinc finger matrin-type protein 2 (ZMAT2).